The sequence spans 247 residues: Cell division protein ZapD (247 aa).

This sequence belongs to the ZapD family. As to quaternary structure, interacts with FtsZ.

The protein localises to the cytoplasm. Cell division factor that enhances FtsZ-ring assembly. Directly interacts with FtsZ and promotes bundling of FtsZ protofilaments, with a reduction in FtsZ GTPase activity. This Enterobacter sp. (strain 638) protein is Cell division protein ZapD.